Reading from the N-terminus, the 1221-residue chain is X-linked retinitis pigmentosa GTPase regulator-interacting protein 1 (1221 aa).

Polar residues-rich tracts occupy residues Met1–Pro15 and Gly88–Val97. Disordered regions lie at residues Met1–Asp22, Ala68–Ser107, and Ser119–Met196. Basic and acidic residues-rich tracts occupy residues His134–Leu147 and Phe155–Val168. Positions Leu267 to Gly533 form a coiled coil. The region spanning Gln723–Phe843 is the C2 domain. A disordered region spans residues Pro869–Thr947. Residues Gln903 to Gly914 show a composition bias toward polar residues. Residues Ser1027–Thr1216 are interaction with RPGR.

Belongs to the RPGRIP1 family. In terms of assembly, forms homodimers and elongated homopolymers. Interacts with NPHP4. Interacts with NEK4. Interacts with RPGR. Interacts with SPATA7. Interacts with CEP290/NPHP6; mediating the association between RPGR and CEP290/NPHP6. As to expression, retina, brain, skeletal muscle and kidney. Colocalizes with RGPR in the outer segment of rod photoreceptors and cone outer segments.

The protein localises to the cell projection. The protein resides in the cilium. Its function is as follows. May function as scaffolding protein. Required for normal location of RPGR at the connecting cilium of photoreceptor cells. Required for normal disk morphogenesis and disk organization in the outer segment of photoreceptor cells and for survival of photoreceptor cells. This Bos taurus (Bovine) protein is X-linked retinitis pigmentosa GTPase regulator-interacting protein 1 (RPGRIP1).